The primary structure comprises 634 residues: RING finger protein 207 (634 aa).

An RING-type zinc finger spans residues 25–64; it reads CPLCHVQYERPCLLDCFHDFCAGCLRGRATDGRLTCPLCQ. The B box-type; atypical zinc finger occupies 93–145; it reads VEAVRCANCDLECSEQDVETTYFCNTCGQPLCARCRDETHRARMFARHDIVAL. Residues Cys98, Cys101, Cys127, and His132 each coordinate Zn(2+). Coiled coils occupy residues 422–457 and 494–518; these read EHCR…KHHS and EIWE…HDLL. The segment at 552–634 is disordered; that stretch reads FQAPVDEQSE…DVPTWREHPT (83 aa).

As to quaternary structure, interacts with the core-glycosylated, but not the fully glycosylated form of KCNH2/HERG. Interacts with DNAJA1 and HSPA8. Interacts (via the C-terminus) with HSPA1A; this interaction additively increases KCNH2 expression.

It is found in the cytoplasm. In terms of biological role, plays a role in cardiac repolarization possibly by stabilizing membrane expression of the potassium channel KCNH2/HERG, or by assisting its synthesis, folding or export from the endoplasmic reticulum, in a heat shock protein-dependent manner. The chain is RING finger protein 207 (RNF207) from Homo sapiens (Human).